A 126-amino-acid chain; its full sequence is Phosphoribosyl-AMP cyclohydrolase (126 aa).

Asp82 lines the Mg(2+) pocket. Cys83 lines the Zn(2+) pocket. Residues Asp84 and Asp86 each contribute to the Mg(2+) site. Zn(2+) is bound by residues Cys99 and Cys106.

Belongs to the PRA-CH family. As to quaternary structure, homodimer. Requires Mg(2+) as cofactor. Zn(2+) is required as a cofactor.

The protein resides in the cytoplasm. The enzyme catalyses 1-(5-phospho-beta-D-ribosyl)-5'-AMP + H2O = 1-(5-phospho-beta-D-ribosyl)-5-[(5-phospho-beta-D-ribosylamino)methylideneamino]imidazole-4-carboxamide. It functions in the pathway amino-acid biosynthesis; L-histidine biosynthesis; L-histidine from 5-phospho-alpha-D-ribose 1-diphosphate: step 3/9. In terms of biological role, catalyzes the hydrolysis of the adenine ring of phosphoribosyl-AMP. The polypeptide is Phosphoribosyl-AMP cyclohydrolase (Micrococcus luteus (strain ATCC 4698 / DSM 20030 / JCM 1464 / CCM 169 / CCUG 5858 / IAM 1056 / NBRC 3333 / NCIMB 9278 / NCTC 2665 / VKM Ac-2230) (Micrococcus lysodeikticus)).